A 501-amino-acid chain; its full sequence is Solute carrier family 2, facilitated glucose transporter member 5 (501 aa).

N-acetylmethionine is present on Met1. Topologically, residues 1-18 (MEPQDPVKREGRLTPVIV) are cytoplasmic. A helical membrane pass occupies residues 19–39 (LATLIAAFGSSFQYGYNVAAI). Tyr32 is a D-fructose binding site. Residues 40–68 (NSPSEFMKDFYNYTYYDRVGEYMNEFYLT) are Extracellular-facing. An N-linked (GlcNAc...) asparagine glycan is attached at Asn51. A helical membrane pass occupies residues 69-91 (LLWSVTVSMFPFGGFLGSLMVGP). Topologically, residues 92 to 98 (LVNNLGR) are cytoplasmic. The helical transmembrane segment at 99-119 (KGTLLFNNIFSIVPALLMGFS) threads the bilayer. Residues 120–126 (ELAKSFE) are Extracellular-facing. A helical membrane pass occupies residues 127–149 (MIIVARVLVGICAGLSSNVVPMY). Over 150-161 (LGELAPKNWRGA) the chain is Cytoplasmic. A helical membrane pass occupies residues 162–182 (LGVVPQLFITIGILVAQIFGL). Gln167 is a binding site for D-fructose. Topologically, residues 183–192 (RSLLANEEGW) are extracellular. A helical membrane pass occupies residues 193-213 (PILLGLTGIPAVLQLLFLPFF). Residues 214-277 (PESPRYLLIQ…LFKMRSLRWQ (64 aa)) are Cytoplasmic-facing. A helical transmembrane segment spans residues 278-298 (VISIIVLMAGQQLSGVNAIYY). Residues Gln288 and 296-298 (IYY) contribute to the D-fructose site. Topologically, residues 299 to 313 (YADQIYLSAGVNEDD) are extracellular. A helical transmembrane segment spans residues 314 to 334 (VQYVTAGTGAVNVLITVCAIF). At 335–342 (VVELMGRR) the chain is on the cytoplasmic side. The helical transmembrane segment at 343–363 (FLLLLGFSVCFTACCVLTGAL) threads the bilayer. The Extracellular segment spans residues 364–371 (ALQDVISW). The helical transmembrane segment at 372 to 394 (MPYVSIACVISYVIGHALGPSPI) threads the bilayer. Residue His387 coordinates D-fructose. The Cytoplasmic segment spans residues 395–412 (PALLVTEIFLQSSRPAAY). Residues 413 to 433 (MVAGTVHWLSNFTVGLVFPFI) form a helical membrane-spanning segment. 419–420 (HW) contacts D-fructose. Residues 434–439 (QVGLGA) are Extracellular-facing. A helical transmembrane segment spans residues 440 to 460 (YSFVIFAVICLLTTVYIFLII). At 461-501 (PETKSKTFIEINRIFIKMNKVPGVHPEKEELKEFPPSTARQ) the chain is on the cytoplasmic side.

This sequence belongs to the major facilitator superfamily. Sugar transporter (TC 2.A.1.1) family. Glucose transporter subfamily.

It localises to the apical cell membrane. Its subcellular location is the cell membrane. It is found in the sarcolemma. The catalysed reaction is D-fructose(out) = D-fructose(in). Functionally, functions as a fructose transporter that has only low activity with other monosaccharides. Can mediate the uptake of deoxyglucose, but with low efficiency. Essential for fructose uptake in the small intestine. Plays a role in the regulation of salt uptake and blood pressure in response to dietary fructose. Required for the development of high blood pressure in response to high dietary fructose intake. In Bos taurus (Bovine), this protein is Solute carrier family 2, facilitated glucose transporter member 5.